Reading from the N-terminus, the 351-residue chain is Uroporphyrinogen decarboxylase (351 aa).

Residues Arg-25–Arg-29, Asp-74, Tyr-151, Ser-206, and His-325 each bind substrate.

It belongs to the uroporphyrinogen decarboxylase family. In terms of assembly, homodimer.

The protein resides in the cytoplasm. The catalysed reaction is uroporphyrinogen III + 4 H(+) = coproporphyrinogen III + 4 CO2. The protein operates within porphyrin-containing compound metabolism; protoporphyrin-IX biosynthesis; coproporphyrinogen-III from 5-aminolevulinate: step 4/4. Catalyzes the decarboxylation of four acetate groups of uroporphyrinogen-III to yield coproporphyrinogen-III. The chain is Uroporphyrinogen decarboxylase from Chlorobium chlorochromatii (strain CaD3).